The primary structure comprises 330 residues: Ferredoxin--NADP reductase (330 aa).

FAD-binding residues include Glu-35, Gln-43, Tyr-48, Val-90, Phe-123, Asp-285, and Thr-326.

It belongs to the ferredoxin--NADP reductase type 2 family. Homodimer. Requires FAD as cofactor.

The catalysed reaction is 2 reduced [2Fe-2S]-[ferredoxin] + NADP(+) + H(+) = 2 oxidized [2Fe-2S]-[ferredoxin] + NADPH. This chain is Ferredoxin--NADP reductase, found in Streptococcus pyogenes serotype M6 (strain ATCC BAA-946 / MGAS10394).